Consider the following 133-residue polypeptide: MSQGPPAGGVLQSSVAAPGNQPQSPKDDDRKVRRREKNRVAAQRSRKKQTQKSDKLHEEHESLEQENSVLRREIAKLKEELRHLTEALKEHEKMCPLLLCPMNFVQLRPDPVASWSAHDAPDHPSFIWLGTLV.

Residues 1–68 (MSQGPPAGGV…EHESLEQENS (68 aa)) form a disordered region. Phosphoserine is present on residues Ser-2 and Ser-24. Positions 11–24 (LQSSVAAPGNQPQS) are enriched in polar residues. Residues 28 to 91 (DDRKVRRREK…RHLTEALKEH (64 aa)) form the bZIP domain. The segment at 30–55 (RKVRRREKNRVAAQRSRKKQTQKSDK) is basic motif. The span at 51-68 (QKSDKLHEEHESLEQENS) shows a compositional bias: basic and acidic residues. The segment at 56 to 84 (LHEEHESLEQENSVLRREIAKLKEELRHL) is leucine-zipper.

This sequence belongs to the bZIP family. In terms of assembly, heterodimer; heterodimerizes with JUN family proteins. Interacts with JUN. In terms of tissue distribution, ubiquitously expressed.

The protein resides in the nucleus. AP-1 family transcription factor that controls the differentiation of CD8(+) thymic conventional dendritic cells in the immune system. Acts via the formation of a heterodimer with JUN family proteins that recognizes and binds DNA sequence 5'-TGA[CG]TCA-3' and regulates expression of target genes. Required for development of CD8-alpha(+) classical dendritic cells (cDCs) and related CD103(+) dendritic cells that cross-present antigens to CD8 T-cells and produce interleukin-12 (IL12) in response to pathogens. This Rattus norvegicus (Rat) protein is Basic leucine zipper transcriptional factor ATF-like 3 (Batf3).